The chain runs to 218 residues: MVERQIAARGVHDPRVLAAMRKVPREAFLPEPMRDLAYEDAPVPIAAEQTMSQPYIVALMVEALLLQGSDNVLEIGAGSGYAAAVLGEIAGHVTTVERIATLADAAAAKLAELGYGDVDVHRSDGTRGWPAAAPYDAIVVAAGGPQVPESLKAQLKIGGRLVMPVGADQQAQELVRLTRLGEADFKREHLGDVRFVPLLGAEGWQQPEPAGRTAREKG.

S52 is a catalytic residue.

Belongs to the methyltransferase superfamily. L-isoaspartyl/D-aspartyl protein methyltransferase family.

Its subcellular location is the cytoplasm. It carries out the reaction [protein]-L-isoaspartate + S-adenosyl-L-methionine = [protein]-L-isoaspartate alpha-methyl ester + S-adenosyl-L-homocysteine. Catalyzes the methyl esterification of L-isoaspartyl residues in peptides and proteins that result from spontaneous decomposition of normal L-aspartyl and L-asparaginyl residues. It plays a role in the repair and/or degradation of damaged proteins. This is Protein-L-isoaspartate O-methyltransferase from Rhodopseudomonas palustris (strain ATCC BAA-98 / CGA009).